The following is a 1299-amino-acid chain: Tubulin polyglutamylase TTLL5 (1299 aa).

The TTL domain occupies arginine 62 to serine 407. ATP-binding positions include lysine 180, arginine 186–glycine 187, serine 208–isoleucine 211, and lysine 221–aspartate 223. Arginine 186 serves as a coordination point for a protein. An L-glutamate-binding site is contributed by arginine 247. Threonine 268 to asparagine 269 lines the ATP pocket. Residues tyrosine 270, serine 271, and lysine 293 each coordinate L-glutamate. 3 residues coordinate Mg(2+): aspartate 353, glutamate 366, and asparagine 368. Positions proline 378–threonine 488 are c-MTBD region. Lysine 384 contributes to the L-glutamate binding site. 5 disordered regions span residues glutamate 589–glutamate 626, glycine 832–histidine 853, serine 918–alanine 941, arginine 1088–glutamine 1130, and serine 1217–glycine 1275. Residues glutamate 597 to glutamine 617 are compositionally biased toward acidic residues. A compositionally biased stretch (low complexity) spans serine 838–serine 847. 3 stretches are compositionally biased toward polar residues: residues serine 1104–glutamine 1130, serine 1217–proline 1230, and alanine 1258–glycine 1275.

This sequence belongs to the tubulin--tyrosine ligase family. In terms of assembly, interacts with the transcriptional coactivators NCOA1/SRC-1 and NCOA2/TIF2. Mg(2+) serves as cofactor.

Its subcellular location is the cell projection. It localises to the cilium. It is found in the cytoplasm. The protein resides in the cytoskeleton. The protein localises to the cilium basal body. Its subcellular location is the nucleus. It carries out the reaction L-glutamyl-[protein] + L-glutamate + ATP = gamma-L-glutamyl-L-glutamyl-[protein] + ADP + phosphate + H(+). The catalysed reaction is (L-glutamyl)(n)-gamma-L-glutamyl-L-glutamyl-[protein] + L-glutamate + ATP = (L-glutamyl)(n+1)-gamma-L-glutamyl-L-glutamyl-[protein] + ADP + phosphate + H(+). Polyglutamylase which modifies tubulin, generating polyglutamate side chains on the gamma-carboxyl group of specific glutamate residues within the C-terminal tail of tubulin. Preferentially mediates ATP-dependent initiation step of the polyglutamylation reaction over the elongation step. Preferentially modifies the alpha-tubulin tail over a beta-tail. Required for CCSAP localization to both polyglutamylated spindle and cilia microtubules. Increases the effects of transcriptional coactivator NCOA2/TIF2 in glucocorticoid receptor-mediated repression and induction and in androgen receptor-mediated induction. This is Tubulin polyglutamylase TTLL5 (TTLL5) from Pongo abelii (Sumatran orangutan).